The sequence spans 367 residues: Probable dual-specificity RNA methyltransferase RlmN (367 aa).

Glutamate 92 (proton acceptor) is an active-site residue. Residues 98–326 (QEYGLSVCVT…YDTLKKNGIN (229 aa)) form the Radical SAM core domain. Cysteine 105 and cysteine 341 are oxidised to a cystine. The [4Fe-4S] cluster site is built by cysteine 112, cysteine 116, and cysteine 119. S-adenosyl-L-methionine is bound by residues 164-165 (GE), serine 196, 219-221 (SLH), and asparagine 297. Cysteine 341 (S-methylcysteine intermediate) is an active-site residue.

This sequence belongs to the radical SAM superfamily. RlmN family. It depends on [4Fe-4S] cluster as a cofactor.

It is found in the cytoplasm. The enzyme catalyses adenosine(2503) in 23S rRNA + 2 reduced [2Fe-2S]-[ferredoxin] + 2 S-adenosyl-L-methionine = 2-methyladenosine(2503) in 23S rRNA + 5'-deoxyadenosine + L-methionine + 2 oxidized [2Fe-2S]-[ferredoxin] + S-adenosyl-L-homocysteine. It catalyses the reaction adenosine(37) in tRNA + 2 reduced [2Fe-2S]-[ferredoxin] + 2 S-adenosyl-L-methionine = 2-methyladenosine(37) in tRNA + 5'-deoxyadenosine + L-methionine + 2 oxidized [2Fe-2S]-[ferredoxin] + S-adenosyl-L-homocysteine. Its function is as follows. Specifically methylates position 2 of adenine 2503 in 23S rRNA and position 2 of adenine 37 in tRNAs. This chain is Probable dual-specificity RNA methyltransferase RlmN, found in Listeria innocua serovar 6a (strain ATCC BAA-680 / CLIP 11262).